The following is a 540-amino-acid chain: Esterase B1 (540 aa).

Cys68 and Cys81 are disulfide-bonded. The active-site Acyl-ester intermediate is Ser191. Residues Glu324 and His442 each act as charge relay system in the active site. Asn452 carries an N-linked (GlcNAc...) asparagine glycan.

Belongs to the type-B carboxylesterase/lipase family.

The catalysed reaction is a carboxylic ester + H2O = an alcohol + a carboxylate + H(+). Functionally, overproduction of nonspecific esterases is a common mechanism of resistance to organophosphate insecticides. This Culex pipiens (House mosquito) protein is Esterase B1 (B1).